A 468-amino-acid chain; its full sequence is Glucose transport protein (468 aa).

At 1 to 17 (MNPSSSPSQSTANVKFV) the chain is on the cytoplasmic side. The chain crosses the membrane as a helical span at residues 18-38 (LLISGVAALGGFLFGFDTAVI). Residues 39 to 58 (NGAVAALQKHFQTDSLLTGL) lie on the Extracellular side of the membrane. Residues 59–78 (SVSLALLGSALGAFGAGPIA) form a helical membrane-spanning segment. At 79 to 84 (DRHGRI) the chain is on the cytoplasmic side. A helical membrane pass occupies residues 85-105 (KTMILAAVLFTLSSIGSGLPF). Over 106-114 (TIWDFIFWR) the chain is Extracellular. The helical transmembrane segment at 115 to 135 (VLGGIGVGAASVIAPAYIAEV) threads the bilayer. Residues 136 to 149 (SPAHLRGRLGSLQQ) are Cytoplasmic-facing. Residues 150 to 170 (LAIVSGIFIALLSNWFIALMA) form a helical membrane-spanning segment. Topologically, residues 171–186 (GGSAQNPWLFGAAAWR) are extracellular. Residues 187–207 (WMFWTELIPALLYGVCAFLIP) traverse the membrane as a helical segment. The Cytoplasmic portion of the chain corresponds to 208 to 265 (ESPRYLVAQGQGEKAAAILWKVEGGDVPSRIEEIQATVSLDHKPRFSDLLSRRGGLLP). Residues 266–286 (IVWIGMGLSALQQFVGINVIF) traverse the membrane as a helical segment. Residues 287–307 (YYSSVLWRSVGFTEEKSLLIT) are Extracellular-facing. Residues 308 to 328 (VITGFINILTTLVAIAFVDKF) traverse the membrane as a helical segment. The Cytoplasmic portion of the chain corresponds to 329 to 331 (GRK). Residues 332–352 (PLLLMGSIGMTITLGILSVVF) traverse the membrane as a helical segment. The Extracellular portion of the chain corresponds to 353–366 (GGATVVNGQPTLTG). The helical transmembrane segment at 367–387 (AAGIIALVTANLYVFSFGFSW) threads the bilayer. The Cytoplasmic segment spans residues 388 to 412 (GPIVWVLLGEMFNNKIRAAALSVAA). Residues 413 to 433 (GVQWIANFIISTTFPPLLDTV) traverse the membrane as a helical segment. Over 434 to 436 (GLG) the chain is Extracellular. Residues 437 to 457 (PAYGLYATSAAISIFFIWFFV) traverse the membrane as a helical segment. Residues 458-468 (KETKGKTLEQM) are Cytoplasmic-facing.

This sequence belongs to the major facilitator superfamily. Sugar transporter (TC 2.A.1.1) family.

The protein resides in the cell membrane. The protein is Glucose transport protein (gtr) of Synechocystis sp. (strain ATCC 27184 / PCC 6803 / Kazusa).